Reading from the N-terminus, the 327-residue chain is L-lactate dehydrogenase (327 aa).

NAD(+) is bound by residues Val-18, Asp-39, Lys-44, Tyr-69, and 83-84; that span reads GA. Substrate-binding positions include Gln-86, Arg-92, and 124–127; that span reads NPVD. Residues 122–124 and Ser-147 contribute to the NAD(+) site; that span reads AAN. 152–155 provides a ligand contact to substrate; sequence DSAR. Residues Arg-157 and His-172 each contribute to the beta-D-fructose 1,6-bisphosphate site. His-179 acts as the Proton acceptor in catalysis. Tyr-224 carries the phosphotyrosine modification. Residue Thr-233 coordinates substrate.

Belongs to the LDH/MDH superfamily. LDH family. As to quaternary structure, homotetramer.

It is found in the cytoplasm. It catalyses the reaction (S)-lactate + NAD(+) = pyruvate + NADH + H(+). Its pathway is fermentation; pyruvate fermentation to lactate; (S)-lactate from pyruvate: step 1/1. With respect to regulation, allosterically activated by fructose 1,6-bisphosphate (FBP). Its function is as follows. Catalyzes the conversion of lactate to pyruvate. In Streptococcus uberis (strain ATCC BAA-854 / 0140J), this protein is L-lactate dehydrogenase.